A 166-amino-acid chain; its full sequence is Protein UL5 (166 aa).

As to quaternary structure, interacts with host IQGAP1.

The protein resides in the host cytoplasm. In terms of biological role, may play a role in rearrangement of cellular cytoskeleton towards an efficient viral assembly and spreading. This chain is Protein UL5 (UL5), found in Human cytomegalovirus (strain Merlin) (HHV-5).